Reading from the N-terminus, the 156-residue chain is 3-dehydroquinate dehydratase (156 aa).

Tyrosine 22 (proton acceptor) is an active-site residue. Substrate-binding residues include asparagine 73, histidine 79, and aspartate 86. Histidine 99 functions as the Proton donor in the catalytic mechanism. Substrate-binding positions include 100-101 (LS) and arginine 110.

The protein belongs to the type-II 3-dehydroquinase family. In terms of assembly, homododecamer.

It catalyses the reaction 3-dehydroquinate = 3-dehydroshikimate + H2O. Its pathway is metabolic intermediate biosynthesis; chorismate biosynthesis; chorismate from D-erythrose 4-phosphate and phosphoenolpyruvate: step 3/7. Catalyzes a trans-dehydration via an enolate intermediate. The polypeptide is 3-dehydroquinate dehydratase (Nitratiruptor sp. (strain SB155-2)).